The following is a 197-amino-acid chain: TATA-box-binding protein (197 aa).

Tandem repeats lie at residues 14–90 (IENI…IKTL) and 105–181 (IQNI…FDKL).

It belongs to the TBP family.

General factor that plays a role in the activation of archaeal genes transcribed by RNA polymerase. Binds specifically to the TATA box promoter element which lies close to the position of transcription initiation. The sequence is that of TATA-box-binding protein (tbp) from Sulfolobus acidocaldarius (strain ATCC 33909 / DSM 639 / JCM 8929 / NBRC 15157 / NCIMB 11770).